Consider the following 184-residue polypeptide: UPF0149 protein PSEEN5316 (184 aa).

This sequence belongs to the UPF0149 family.

In Pseudomonas entomophila (strain L48), this protein is UPF0149 protein PSEEN5316.